We begin with the raw amino-acid sequence, 409 residues long: Tryptophan synthase beta chain (409 aa).

Lysine 95 bears the N6-(pyridoxal phosphate)lysine mark.

Belongs to the TrpB family. As to quaternary structure, tetramer of two alpha and two beta chains. It depends on pyridoxal 5'-phosphate as a cofactor.

It carries out the reaction (1S,2R)-1-C-(indol-3-yl)glycerol 3-phosphate + L-serine = D-glyceraldehyde 3-phosphate + L-tryptophan + H2O. It functions in the pathway amino-acid biosynthesis; L-tryptophan biosynthesis; L-tryptophan from chorismate: step 5/5. In terms of biological role, the beta subunit is responsible for the synthesis of L-tryptophan from indole and L-serine. This Pseudomonas syringae pv. tomato (strain ATCC BAA-871 / DC3000) protein is Tryptophan synthase beta chain.